The following is a 342-amino-acid chain: Dihydroorotate dehydrogenase (quinone) (342 aa).

Residues A61–K65 and T85 each bind FMN. Position 65 (K65) interacts with substrate. A substrate-binding site is contributed by N110 to F114. FMN-binding residues include N138 and N171. N171 serves as a coordination point for substrate. S174 serves as the catalytic Nucleophile. Substrate is bound at residue N176. Residues K216 and T244 each contribute to the FMN site. Residue N245 to T246 coordinates substrate. FMN-binding positions include G267, G296, and Y317 to S318.

It belongs to the dihydroorotate dehydrogenase family. Type 2 subfamily. In terms of assembly, monomer. FMN is required as a cofactor.

The protein resides in the cell membrane. It catalyses the reaction (S)-dihydroorotate + a quinone = orotate + a quinol. Its pathway is pyrimidine metabolism; UMP biosynthesis via de novo pathway; orotate from (S)-dihydroorotate (quinone route): step 1/1. Its function is as follows. Catalyzes the conversion of dihydroorotate to orotate with quinone as electron acceptor. In Pseudomonas aeruginosa (strain LESB58), this protein is Dihydroorotate dehydrogenase (quinone).